We begin with the raw amino-acid sequence, 371 residues long: E3 ubiquitin-protein ligase RHF1A (371 aa).

Residues 46-87 (CSICLEPFTLQDPSTVTSCKHEYHLQCIIEWSQRSKECPICW) form an RING-type; atypical zinc finger. Disordered stretches follow at residues 199-254 (HQNS…SSLP) and 348-371 (EANS…GETC). A compositionally biased stretch (polar residues) spans 200-225 (QNSNPCPSPGSMTPSPVSGHSSIPAD). Over residues 226–252 (SNNGSRISPGPSPSRSSQSPKSPEASS) the composition is skewed to low complexity.

As to quaternary structure, interacts with KRP6. As to expression, expressed in stems, flowers, green siliques, cauline leaves, seeds and roots.

The catalysed reaction is S-ubiquitinyl-[E2 ubiquitin-conjugating enzyme]-L-cysteine + [acceptor protein]-L-lysine = [E2 ubiquitin-conjugating enzyme]-L-cysteine + N(6)-ubiquitinyl-[acceptor protein]-L-lysine.. The protein operates within protein modification; protein ubiquitination. Its function is as follows. E3 ubiquitin-protein ligase involved in the positive regulation of the gametogenesis progression. Mediates the proteasomal degradation of KRP6, a cyclin-dependent kinase inhibitor which accumulates during meiosis and blocks the progression of subsequent mitoses during gametophyte development. Functions in association with RHF2A. Possesses E3 ubiquitin-protein ligase activity when associated with the E2 enzyme UBC8 in vitro. The polypeptide is E3 ubiquitin-protein ligase RHF1A (Arabidopsis thaliana (Mouse-ear cress)).